Reading from the N-terminus, the 886-residue chain is DNA mismatch repair protein MutS (886 aa).

641 to 648 (GPNMAGKS) contacts ATP.

It belongs to the DNA mismatch repair MutS family.

This protein is involved in the repair of mismatches in DNA. It is possible that it carries out the mismatch recognition step. This protein has a weak ATPase activity. The protein is DNA mismatch repair protein MutS of Rickettsia rickettsii (strain Sheila Smith).